A 253-amino-acid polypeptide reads, in one-letter code: Claudin domain-containing protein 1 (253 aa).

Residues 5–25 (FATAFVIACVLSLISTIYMAA) traverse the membrane as a helical segment. 2 N-linked (GlcNAc...) asparagine glycosylation sites follow: asparagine 42 and asparagine 72. Transmembrane regions (helical) follow at residues 141-161 (FLLP…GLCA), 175-195 (ILHL…VAGI), and 216-236 (FCLA…FIWA).

It belongs to the PMP-22/EMP/MP20 family. In the brain, highly expressed in endothelial cells of the cerebellum compared to other regions (at protein level).

The protein localises to the cell junction. Its subcellular location is the tight junction. It localises to the cell membrane. Functionally, plays a role in negatively regulating the permeability of cells to small molecules. This is Claudin domain-containing protein 1 (Cldnd1) from Mus musculus (Mouse).